Here is a 323-residue protein sequence, read N- to C-terminus: Beta-ketoacyl-[acyl-carrier-protein] synthase III (323 aa).

Residues cysteine 113 and histidine 250 contribute to the active site. The segment at glutamine 251–arginine 255 is ACP-binding. Asparagine 280 is a catalytic residue.

It belongs to the thiolase-like superfamily. FabH family. Homodimer.

It is found in the cytoplasm. It carries out the reaction malonyl-[ACP] + acetyl-CoA + H(+) = 3-oxobutanoyl-[ACP] + CO2 + CoA. Its pathway is lipid metabolism; fatty acid biosynthesis. Its function is as follows. Catalyzes the condensation reaction of fatty acid synthesis by the addition to an acyl acceptor of two carbons from malonyl-ACP. Catalyzes the first condensation reaction which initiates fatty acid synthesis and may therefore play a role in governing the total rate of fatty acid production. Possesses both acetoacetyl-ACP synthase and acetyl transacylase activities. Its substrate specificity determines the biosynthesis of branched-chain and/or straight-chain of fatty acids. The sequence is that of Beta-ketoacyl-[acyl-carrier-protein] synthase III from Rhizobium rhizogenes (strain K84 / ATCC BAA-868) (Agrobacterium radiobacter).